The following is a 249-amino-acid chain: RNA polymerase sigma factor SigI3 (249 aa).

Positions 60–73 match the Polymerase core binding motif; sequence EEFSIGLAAFNEAI. The segment at residues 199 to 218 is a DNA-binding region (H-T-H motif); it reads MKEVLSRIKVNHKTIQRNRK.

Belongs to the sigma-70 factor family. SigI subfamily. Interacts with RsgI3.

The protein localises to the cytoplasm. With respect to regulation, negatively regulated by the anti-sigma-I factor RsgI3. Binding of the polysaccharide substrate to RsgI3 may lead to the release and activation of SigI3. In terms of biological role, sigma factors are initiation factors that promote the attachment of RNA polymerase to specific initiation sites and are then released. This sigma factor is involved in regulation of cellulosomal genes via an external polysaccharide-sensing mechanism. Recognizes the predicted promoters associated with sigI3 itself, pl11, ce12 and cipA. This Acetivibrio thermocellus (strain ATCC 27405 / DSM 1237 / JCM 9322 / NBRC 103400 / NCIMB 10682 / NRRL B-4536 / VPI 7372) (Clostridium thermocellum) protein is RNA polymerase sigma factor SigI3.